Here is a 175-residue protein sequence, read N- to C-terminus: Avenin-like a3 (175 aa).

The signal sequence occupies residues 1-19; the sequence is MKTMFLLALLAFTATSAVA.

The protein belongs to the prolamin family. In terms of processing, contains 7 disulfide bonds.

In terms of biological role, seed storage protein. Not integrated in the gluten polymer through disulfide bonds, unless incorporated by reduction and reoxidation during dough making. Increases dough strength and bread volume, but decreases dough stability when added into a base wheat flour. This chain is Avenin-like a3, found in Triticum aestivum (Wheat).